Consider the following 485-residue polypeptide: Aspartyl/glutamyl-tRNA(Asn/Gln) amidotransferase subunit B (485 aa).

Belongs to the GatB/GatE family. GatB subfamily. In terms of assembly, heterotrimer of A, B and C subunits.

It carries out the reaction L-glutamyl-tRNA(Gln) + L-glutamine + ATP + H2O = L-glutaminyl-tRNA(Gln) + L-glutamate + ADP + phosphate + H(+). It catalyses the reaction L-aspartyl-tRNA(Asn) + L-glutamine + ATP + H2O = L-asparaginyl-tRNA(Asn) + L-glutamate + ADP + phosphate + 2 H(+). Allows the formation of correctly charged Asn-tRNA(Asn) or Gln-tRNA(Gln) through the transamidation of misacylated Asp-tRNA(Asn) or Glu-tRNA(Gln) in organisms which lack either or both of asparaginyl-tRNA or glutaminyl-tRNA synthetases. The reaction takes place in the presence of glutamine and ATP through an activated phospho-Asp-tRNA(Asn) or phospho-Glu-tRNA(Gln). The chain is Aspartyl/glutamyl-tRNA(Asn/Gln) amidotransferase subunit B from Rhodospirillum rubrum (strain ATCC 11170 / ATH 1.1.1 / DSM 467 / LMG 4362 / NCIMB 8255 / S1).